The sequence spans 267 residues: Small ribosomal subunit protein uS10m (267 aa).

Residues 1-10 constitute a mitochondrion transit peptide; sequence MLSRILGVRN.

It belongs to the universal ribosomal protein uS10 family. As to quaternary structure, part of the mitochondrial small ribosomal subunit.

It is found in the mitochondrion. Functionally, involved in mitochondrial genome encoded proteins translation. Involved in the binding of tRNA to the ribosomes. The sequence is that of Small ribosomal subunit protein uS10m (RSM10) from Debaryomyces hansenii (strain ATCC 36239 / CBS 767 / BCRC 21394 / JCM 1990 / NBRC 0083 / IGC 2968) (Yeast).